Consider the following 365-residue polypeptide: Peptide chain release factor 2 (365 aa).

An N5-methylglutamine modification is found at Gln-252.

This sequence belongs to the prokaryotic/mitochondrial release factor family. Methylated by PrmC. Methylation increases the termination efficiency of RF2.

Its subcellular location is the cytoplasm. Peptide chain release factor 2 directs the termination of translation in response to the peptide chain termination codons UGA and UAA. This is Peptide chain release factor 2 from Aeromonas salmonicida (strain A449).